The chain runs to 95 residues: Integration host factor subunit beta (95 aa).

It belongs to the bacterial histone-like protein family. In terms of assembly, heterodimer of an alpha and a beta chain.

This protein is one of the two subunits of integration host factor, a specific DNA-binding protein that functions in genetic recombination as well as in transcriptional and translational control. This chain is Integration host factor subunit beta, found in Colwellia psychrerythraea (strain 34H / ATCC BAA-681) (Vibrio psychroerythus).